Consider the following 147-residue polypeptide: Ubiquitin-conjugating enzyme E2 5A (147 aa).

Over residues 1 to 15 (MASKRIQKELKDLQK) the composition is skewed to basic and acidic residues. Residues 1-24 (MASKRIQKELKDLQKDPPTSCSAG) form a disordered region. The UBC core domain occupies 1–147 (MASKRIQKEL…ARTWTQRYAM (147 aa)). C85 (glycyl thioester intermediate) is an active-site residue.

It belongs to the ubiquitin-conjugating enzyme family.

It catalyses the reaction S-ubiquitinyl-[E1 ubiquitin-activating enzyme]-L-cysteine + [E2 ubiquitin-conjugating enzyme]-L-cysteine = [E1 ubiquitin-activating enzyme]-L-cysteine + S-ubiquitinyl-[E2 ubiquitin-conjugating enzyme]-L-cysteine.. It functions in the pathway protein modification; protein ubiquitination. Functionally, E2 conjugating enzyme that associates with the E3 ubiquitin-protein ligase EL5 to mediate ubiquitination of target proteins. This is Ubiquitin-conjugating enzyme E2 5A (UBC5A) from Oryza sativa subsp. japonica (Rice).